A 333-amino-acid chain; its full sequence is Fatty acid hydroxylase domain-containing protein 2 (333 aa).

The next 6 helical transmembrane spans lie at 29–49 (FILGSGLLSFVAFWNSVTWHL), 77–97 (ILFFIGAIQVPCLFFWSFNGL), 134–154 (TVLFNQCMVSFPMVVFLYPFL), 168–188 (FHWFLLELAIFTLIEEVLFYY), 215–235 (VISLYAHPIEHVVSNMLPAIV), and 237–257 (PLVMGSHLSSITMWFSLALII). The Fatty acid hydroxylase domain occupies 176–299 (AIFTLIEEVL…LGVLDHLHGT (124 aa)).

It belongs to the sterol desaturase family.

It localises to the cytoplasm. The protein resides in the membrane. Promotes megakaryocyte differentiation by enhancing ERK phosphorylation and up-regulating RUNX1 expression. The sequence is that of Fatty acid hydroxylase domain-containing protein 2 (FAXDC2) from Macaca fascicularis (Crab-eating macaque).